A 250-amino-acid chain; its full sequence is 2,3-bisphosphoglycerate-dependent phosphoglycerate mutase (250 aa).

Residues 10 to 17 (RHGESQWN), 23 to 24 (TG), arginine 62, 89 to 92 (ERHY), lysine 100, 116 to 117 (RR), and 185 to 186 (GN) contribute to the substrate site. Histidine 11 functions as the Tele-phosphohistidine intermediate in the catalytic mechanism. Glutamate 89 functions as the Proton donor/acceptor in the catalytic mechanism.

The protein belongs to the phosphoglycerate mutase family. BPG-dependent PGAM subfamily. Homodimer.

The catalysed reaction is (2R)-2-phosphoglycerate = (2R)-3-phosphoglycerate. It functions in the pathway carbohydrate degradation; glycolysis; pyruvate from D-glyceraldehyde 3-phosphate: step 3/5. Catalyzes the interconversion of 2-phosphoglycerate and 3-phosphoglycerate. The chain is 2,3-bisphosphoglycerate-dependent phosphoglycerate mutase from Yersinia enterocolitica serotype O:8 / biotype 1B (strain NCTC 13174 / 8081).